Here is a 324-residue protein sequence, read N- to C-terminus: T-cell acute lymphocytic leukemia protein 1 homolog (324 aa).

The interval 1-49 (MMEKLKSEQFPLSPSAEGCASPPRGDGDARGKQEGTTAETGEHRLPEEL) is disordered. The region spanning 185-237 (VRRIFTNSRERWRQQNVNGAFAELRKLIPTHPPDKKLSKNEILRLAMKYINFL) is the bHLH domain. A disordered region spans residues 276-324 (SPNSSCGSLLDGDASPESFTEDQDSSVESRPSARGLHHSSLPLDGNAQR).

In terms of tissue distribution, expressed in hemopoietic and endothelial lineages. Isoform beta emerges first, expressing in the entire anterior and posterior lateral mesoderm (ALM and PLM respectively), and in the ventral wall of the dorsal aorta, where definitive hemopoiesis begins. Isoform alpha expresses later as two pairs of stripes in the PLM and ALM, and becomes restricted to the intermediate cell mass (ICM) by the 18-somite stage. The ICM is the key site of primitive hemopoiesis, giving rise to the erythroid lineage. Also expressed in all stages of endocardial cell migration and in the developing midbrain, hindbrain and spinal cord. In adults, expressed in the main hemopoietic organs, namely the kidney (where isoform alpha is the predominant isoform) and the spleen. Also expressed in the liver, gill and gonads.

Its subcellular location is the nucleus. Transcription factor that plays a pivotal role in hemopoietic and endothelial development, acting synergistically with lmo2 and downstream of clo. Specifies mesodermal precursors to a hemangioblast cell fate. Hemangioblasts are bipotential precursors of blood and endothelium, and in the absence of hemopoietic induction cues such as gata1, tal1/scl-lmo2-induced hemangioblasts differentiate into endothelial cells. Isoform alpha and isoform beta are redundant for the initiation of primitive hemopoiesis but have distinct roles in the regulation of primitive erythroid differentiation and definitive hemopoietic stem cell specification, most likely due to differences in expression levels. Specification of definitive hemopoietic stem cells requires isoform beta. DNA binding is required for erythroid maturation, but not for its other hemopoietic functions. Endothelial roles include development of the dorsal aorta, the site of definitive hemopoiesis in the embryo. Required for angiogenesis but not angioblast specification. Has an additional role in endocardium formation during heart development. May play a role in central nervous system development. The protein is T-cell acute lymphocytic leukemia protein 1 homolog of Danio rerio (Zebrafish).